We begin with the raw amino-acid sequence, 342 residues long: Phosphate acyltransferase (342 aa).

Belongs to the PlsX family. As to quaternary structure, homodimer. Probably interacts with PlsY.

The protein resides in the cytoplasm. The catalysed reaction is a fatty acyl-[ACP] + phosphate = an acyl phosphate + holo-[ACP]. It participates in lipid metabolism; phospholipid metabolism. Functionally, catalyzes the reversible formation of acyl-phosphate (acyl-PO(4)) from acyl-[acyl-carrier-protein] (acyl-ACP). This enzyme utilizes acyl-ACP as fatty acyl donor, but not acyl-CoA. The protein is Phosphate acyltransferase of Leuconostoc mesenteroides subsp. mesenteroides (strain ATCC 8293 / DSM 20343 / BCRC 11652 / CCM 1803 / JCM 6124 / NCDO 523 / NBRC 100496 / NCIMB 8023 / NCTC 12954 / NRRL B-1118 / 37Y).